Reading from the N-terminus, the 365-residue chain is D-alanine--D-alanine ligase (365 aa).

In terms of domain architecture, ATP-grasp spans 135–345 (KLLLKSFNIP…YESLVDNLVS (211 aa)). Residue 168–223 (KQSLNYPVIVKPAMLGSSIGISIAYNDTQIEKCIEEAFEYDLTVVVEKFMKVREIE) coordinates ATP. Mg(2+) contacts are provided by Asp298, Glu312, and Asn314.

It belongs to the D-alanine--D-alanine ligase family. The cofactor is Mg(2+). It depends on Mn(2+) as a cofactor.

Its subcellular location is the cytoplasm. It catalyses the reaction 2 D-alanine + ATP = D-alanyl-D-alanine + ADP + phosphate + H(+). Its pathway is cell wall biogenesis; peptidoglycan biosynthesis. Cell wall formation. The polypeptide is D-alanine--D-alanine ligase (Borrelia hermsii (strain HS1 / DAH)).